We begin with the raw amino-acid sequence, 430 residues long: MANVVVVGAQWGDEGKGKVVDIYTEHADDVVRYQGGNNAGHTLVVNGEKTVLHLIPSGILHKGKRCIIGNGVVLDPEVFIMEINRLKEKGRLQDDSALLVSESVHIIMPYHKQIDLAREAKSGDKKIGTTGRGIGPTYEDKIGRRGIRLMDLLDPEIFARKLRENLEEKNFILEKLLGEKPLSFDEIHKTYSGYADILRKYVANTSLILCKDIAAGKKLLFEGAQGTLLDVDHGTYPFVTSSSTCAGGACTGTGVGPRDIHEIIGISKAYVTRVGSGPFPTELLDADGEQLRQTGGEFGATTGRPRRCGWFDAMVVRFAVRVNGLTGVALTKLDVLNDFDTIKICTGYTYEGKPVEDLPANLAVFEKCQPVYEEMPGWKSDIRGVRRFEDLPEKARLYVHRLQELISCPIVLVSIGPGRDETITIRNPFA.

GTP contacts are provided by residues Gly12–Lys18 and Gly40–Thr42. Catalysis depends on Asp13, which acts as the Proton acceptor. 2 residues coordinate Mg(2+): Asp13 and Gly40. IMP is bound by residues Asp13–Lys16, Asn38–His41, Thr130, Arg144, Gln225, Thr240, and Arg304. His41 serves as the catalytic Proton donor. Position 300 to 306 (Ala300 to Arg306) interacts with substrate. GTP-binding positions include Arg306, Lys332–Asp334, and Ser414–Gly416.

Belongs to the adenylosuccinate synthetase family. As to quaternary structure, homodimer. The cofactor is Mg(2+).

It localises to the cytoplasm. The catalysed reaction is IMP + L-aspartate + GTP = N(6)-(1,2-dicarboxyethyl)-AMP + GDP + phosphate + 2 H(+). Its pathway is purine metabolism; AMP biosynthesis via de novo pathway; AMP from IMP: step 1/2. Its function is as follows. Plays an important role in the de novo pathway of purine nucleotide biosynthesis. Catalyzes the first committed step in the biosynthesis of AMP from IMP. The protein is Adenylosuccinate synthetase of Geobacter metallireducens (strain ATCC 53774 / DSM 7210 / GS-15).